Here is a 140-residue protein sequence, read N- to C-terminus: MKRKHKRLLFVLASFCAAGCALLFILSELRESVSFFYTTSELLSGPQRESNLPVRVGGMVVKGSIARSTDSISFDLTDFKTELNVVYSGMLPPLFGEGVGAVVKGRLLHGKFVADEVLAKHDEKYMPKKYTIPKALPEPK.

Topologically, residues 1–7 (MKRKHKR) are cytoplasmic. The chain crosses the membrane as a helical; Signal-anchor for type II membrane protein span at residues 8-28 (LLFVLASFCAAGCALLFILSE). Residues 29 to 140 (LRESVSFFYT…TIPKALPEPK (112 aa)) are Periplasmic-facing. Heme is bound by residues His-121 and Tyr-125.

This sequence belongs to the CcmE/CycJ family.

The protein localises to the cell inner membrane. Heme chaperone required for the biogenesis of c-type cytochromes. Transiently binds heme delivered by CcmC and transfers the heme to apo-cytochromes in a process facilitated by CcmF and CcmH. The protein is Cytochrome c-type biogenesis protein CcmE of Anaplasma marginale (strain Florida).